The sequence spans 591 residues: Peroxisome assembly protein 2 (591 aa).

A disordered region spans residues 1–78 (MSDSDPKPTA…TNIDTNNNTN (78 aa)). Topologically, residues 1-148 (MSDSDPKPTA…TSREGTRPAF (148 aa)) are peroxisomal matrix. Positions 7–26 (KPTAAKGAAPTSIPNSTRNP) are enriched in low complexity. Positions 27–54 (NPTPPNPNPNPNPISTPAPTPTATPSPP) are enriched in pro residues. Residues 55-78 (IASSSNNGNNSTRSTNIDTNNNTN) are compositionally biased toward low complexity. The helical transmembrane segment at 149–175 (RVGQVDAELLDEELVELLRGQVREALR) threads the bilayer. Over 176 to 196 (YVGGGGGGGGGGGGGGVGSGV) the chain is Cytoplasmic. Residues 197-222 (AQDWEAEISLALRAVLFKLTVWDHDA) traverse the membrane as a helical segment. At 223–246 (TYGAALQNLKYTDARRDGPALAPP) the chain is on the peroxisomal matrix side. Residues 247-273 (SRWQKALYGLVTVGGRYLWAKWEDWLL) traverse the membrane as a helical segment. Over 274 to 283 (EQDDGFEGPS) the chain is Cytoplasmic. Residues 284 to 314 (PRVKRLARWTSALSTLHASAALVSFLVFLLH) traverse the membrane as a helical segment. Residues 315–341 (GRYRTLLDRLLRMRLAPPTSQVSREVS) are Peroxisomal matrix-facing. The helical transmembrane segment at 342–365 (FEYLNRQLVWHAFTEFLLFVLPLV) threads the bilayer. Over 366 to 591 (GINRWRRWLA…EDGLDEDPES (226 aa)) the chain is Cytoplasmic. 8 residues coordinate Zn(2+): Cys-408, Cys-411, Cys-449, Cys-451, Cys-454, Cys-457, Cys-472, and Cys-475. The RING-type; atypical zinc finger occupies 408–475 (CAICYRDQNS…EGEGWPCLRC (68 aa)). Residues 512–591 (KAPSDHEEEE…EDGLDEDPES (80 aa)) form a disordered region. 2 stretches are compositionally biased toward acidic residues: residues 517 to 537 (HEEE…ENEG) and 575 to 591 (SEDY…DPES).

It belongs to the pex2/pex10/pex12 family. In terms of assembly, component of the PEX2-PEX10-PEX12 retrotranslocation channel, composed of PEX2, PEX10 and PEX12.

Its subcellular location is the peroxisome membrane. The enzyme catalyses [E2 ubiquitin-conjugating enzyme]-S-ubiquitinyl-L-cysteine + [acceptor protein]-L-cysteine = [E2 ubiquitin-conjugating enzyme]-L-cysteine + [acceptor protein]-S-ubiquitinyl-L-cysteine.. It participates in protein modification; protein ubiquitination. E3 ubiquitin-protein ligase component of a retrotranslocation channel required for peroxisome organization by mediating export of the PEX5 receptor from peroxisomes to the cytosol, thereby promoting PEX5 recycling. The retrotranslocation channel is composed of PEX2, PEX10 and PEX12; each subunit contributing transmembrane segments that coassemble into an open channel that specifically allows the passage of PEX5 through the peroxisomal membrane. PEX2 also regulates peroxisome organization by acting as a E3 ubiquitin-protein ligase. PEX2 ubiquitinates PEX5 during its passage through the retrotranslocation channel: catalyzes monoubiquitination of PEX5 at 'Cys-6', a modification that acts as a signal for PEX5 extraction into the cytosol. In Thermothelomyces thermophilus (strain ATCC 42464 / BCRC 31852 / DSM 1799) (Sporotrichum thermophile), this protein is Peroxisome assembly protein 2.